Here is a 226-residue protein sequence, read N- to C-terminus: EEF1A lysine methyltransferase 3 (226 aa).

Residues Trp-57, Gly-83–Gly-85, Asp-104, Trp-133, and Ala-150 contribute to the S-adenosyl-L-methionine site.

It belongs to the methyltransferase superfamily. METTL21 family. As to quaternary structure, interacts with members of the heat shock protein 70 and 90 families and of the TCP-1 chaperonin family, as well as with HSPD1, STIP1 and tubulin; at least some of these proteins may be methylation substrates.

It localises to the cytoplasm. Its subcellular location is the cytoskeleton. The protein resides in the microtubule organizing center. The protein localises to the centrosome. It carries out the reaction L-lysyl-[protein] + 3 S-adenosyl-L-methionine = N(6),N(6),N(6)-trimethyl-L-lysyl-[protein] + 3 S-adenosyl-L-homocysteine + 3 H(+). The catalysed reaction is L-lysyl-[protein] + S-adenosyl-L-methionine = N(6)-methyl-L-lysyl-[protein] + S-adenosyl-L-homocysteine + H(+). The enzyme catalyses N(6)-methyl-L-lysyl-[protein] + S-adenosyl-L-methionine = N(6),N(6)-dimethyl-L-lysyl-[protein] + S-adenosyl-L-homocysteine + H(+). It catalyses the reaction N(6),N(6)-dimethyl-L-lysyl-[protein] + S-adenosyl-L-methionine = N(6),N(6),N(6)-trimethyl-L-lysyl-[protein] + S-adenosyl-L-homocysteine + H(+). Protein-lysine methyltransferase that selectively mono-, di- and trimethylates 'Lys-165' of the translation elongation factors EEF1A1 and EEF1A2 in an aminoacyl-tRNA and GTP-dependent manner. EEF1A1 methylation by EEF1AKMT3 is dynamic as well as inducible by stress conditions, such as ER-stress, and plays a regulatory role on mRNA translation. The polypeptide is EEF1A lysine methyltransferase 3 (Homo sapiens (Human)).